A 301-amino-acid chain; its full sequence is NAD kinase 2 (301 aa).

D77 acts as the Proton acceptor in catalysis. Residues 77-78 (DG), R82, 151-152 (NE), R162, D181, and 192-197 (TAYAFS) contribute to the NAD(+) site.

It belongs to the NAD kinase family. Requires a divalent metal cation as cofactor.

Its subcellular location is the cytoplasm. It carries out the reaction NAD(+) + ATP = ADP + NADP(+) + H(+). Involved in the regulation of the intracellular balance of NAD and NADP, and is a key enzyme in the biosynthesis of NADP. Catalyzes specifically the phosphorylation on 2'-hydroxyl of the adenosine moiety of NAD to yield NADP. In Streptomyces avermitilis (strain ATCC 31267 / DSM 46492 / JCM 5070 / NBRC 14893 / NCIMB 12804 / NRRL 8165 / MA-4680), this protein is NAD kinase 2.